A 165-amino-acid polypeptide reads, in one-letter code: uncharacterized protein (165 aa).

The helical transmembrane segment at Ala16–Val36 threads the bilayer.

It belongs to the asfivirus F165R family.

The protein localises to the host membrane. This is an uncharacterized protein from Ornithodoros (relapsing fever ticks).